We begin with the raw amino-acid sequence, 644 residues long: Zinc finger protein 568 (644 aa).

The KRAB domain occupies 48–119 (VTFKDVAVDL…EEEMFGRHCP (72 aa)). C2H2-type zinc fingers lie at residues 222 to 244 (FKCNQCGQDFSHKFDLIRHERIH), 250 to 272 (YECKECGKAFSRKENLITHQKIH), 278 to 300 (YKCNECGKAFIQMSNLIRHHRIH), 306 to 328 (YACKDCWKAFSQKSNLIEHERIH), 334 to 356 (YECKECGKSFSQKQNLIEHEKIH), 362 to 384 (YACNECGRAFSRMSSVTLHMRSH), 390 to 412 (YKCNKCGKAFSQCSVFIIHMRSH), 418 to 440 (YVCSECGKAFSQSSSLTVHMRNH), 446 to 468 (YECKECGKAFSRKENLITHQKIH), 474 to 496 (YECSECGKAFIQMSNLIRHQRIH), 502 to 524 (YACTVCGKAFSQKSNLTEHEKIH), 530 to 552 (YHCNQCGKAFSQRQNLLEHEKIH), 558 to 580 (FKCNECGKAFSRISSLTLHVRSH), 586 to 608 (YECNKCGKAFSQCSLLIIHMRSH), and 614 to 636 (FECNECGKAFSQRASLSIHKRGH).

It belongs to the krueppel C2H2-type zinc-finger protein family. Interacts with TRIM28.

The protein resides in the nucleus. Its function is as follows. Has transcriptional repression activity, partially through the recruitment of the corepressor TRIM28 but also has repression activity independently of this interaction. Essential during embryonic development, where it acts as a direct repressor of a placental-specific transcript of IGF2 in early development and regulates convergent extension movements required for axis elongation and tissue morphogenesis in all germ layers. Also important for normal morphogenesis of extraembryonic tissues including the yolk sac, extraembryonic mesoderm and placenta. May enhance proliferation or maintenance of neural stem cells. The sequence is that of Zinc finger protein 568 (ZNF568) from Homo sapiens (Human).